Reading from the N-terminus, the 713-residue chain is Cyclomaltodextrin glucanotransferase (713 aa).

The signal sequence occupies residues 1–27; sequence MKRFMKLTAVWTLWLSLTLGLLSPVHA. Positions 28–165 are A1; the sequence is APDTSVSNKQ…NIKVIIDFAP (138 aa). Ca(2+) contacts are provided by Asp54, Asn56, Asn59, and Asn60. Residues Cys70 and Cys77 are joined by a disulfide bond. Positions 78 and 80 each coordinate Ca(2+). Position 127–128 (127–128) interacts with substrate; sequence YW. Asn166 lines the Ca(2+) pocket. A b region spans residues 166–229; the sequence is NHTSPASSDD…NLYDLADLNH (64 aa). His167 serves as a coordination point for substrate. Ile217 serves as a coordination point for Ca(2+). Residue 220-223 participates in substrate binding; sequence NLYD. Asp226 is a binding site for Ca(2+). The interval 230-433 is A2; that stretch reads NNSSVDVYLK…LRKSNPAIAY (204 aa). Arg254 serves as a coordination point for substrate. Catalysis depends on Asp256, which acts as the Nucleophile. 259–260 serves as a coordination point for substrate; that stretch reads KH. His260 contacts Ca(2+). The active-site Proton donor is the Glu284. The substrate site is built by His354, Asp398, and Arg402. Residues 434 to 522 are c; that stretch reads GSTHERWINN…GTAVWQYTTD (89 aa). The tract at residues 523–609 is d; it reads ATTPIIGNVG…SNIYDNFEVL (87 aa). The IPT/TIG domain maps to 526 to 607; it reads PIIGNVGPMM…AASNIYDNFE (82 aa). A CBM20 domain is found at 608–713; the sequence is VLTGDQVTVR…TATVNVNWQP (106 aa). The e stretch occupies residues 610–713; the sequence is TGDQVTVRFV…TATVNVNWQP (104 aa).

This sequence belongs to the glycosyl hydrolase 13 family. As to quaternary structure, monomer. It depends on Ca(2+) as a cofactor.

It localises to the secreted. The catalysed reaction is Cyclizes part of a (1-&gt;4)-alpha-D-glucan chain by formation of a (1-&gt;4)-alpha-D-glucosidic bond.. This Bacillus sp. (strain 1011) protein is Cyclomaltodextrin glucanotransferase (cgt).